Reading from the N-terminus, the 527-residue chain is Probable pectinesterase/pectinesterase inhibitor 32 (527 aa).

Residues 1 to 24 (MAKFRQMGSSIFFLFLIIISLCSA) form the signal peptide. Residues 25–165 (HKEAFSSTDL…GTTVRNLLTM (141 aa)) form a pectinesterase inhibitor 32 region. N-linked (GlcNAc...) asparagine glycans are attached at residues N110, N209, N224, and N280. Positions 214-511 (DAVVAADGTG…FTVSQLIQGN (298 aa)) are pectinesterase 32. Substrate contacts are provided by T289 and Q319. Catalysis depends on D342, which acts as the Proton donor; for pectinesterase activity. An intrachain disulfide couples C356 to C376. The active-site Nucleophile; for pectinesterase activity is D363. A glycan (N-linked (GlcNAc...) asparagine) is linked at N423. Substrate is bound by residues R431 and W433. N-linked (GlcNAc...) asparagine glycans are attached at residues N494 and N501.

The protein in the N-terminal section; belongs to the PMEI family. In the C-terminal section; belongs to the pectinesterase family. As to expression, expressed in siliques.

It localises to the secreted. The protein localises to the cell wall. It catalyses the reaction [(1-&gt;4)-alpha-D-galacturonosyl methyl ester](n) + n H2O = [(1-&gt;4)-alpha-D-galacturonosyl](n) + n methanol + n H(+). It functions in the pathway glycan metabolism; pectin degradation; 2-dehydro-3-deoxy-D-gluconate from pectin: step 1/5. In terms of biological role, acts in the modification of cell walls via demethylesterification of cell wall pectin. The polypeptide is Probable pectinesterase/pectinesterase inhibitor 32 (PME32) (Arabidopsis thaliana (Mouse-ear cress)).